We begin with the raw amino-acid sequence, 143 residues long: Probable cyclic pyranopterin monophosphate synthase (143 aa).

Substrate-binding positions include 61-63 (MCH) and 97-98 (ME). The active site involves aspartate 112.

Belongs to the MoaC family. As to quaternary structure, homohexamer; trimer of dimers.

It catalyses the reaction (8S)-3',8-cyclo-7,8-dihydroguanosine 5'-triphosphate = cyclic pyranopterin phosphate + diphosphate. Its pathway is cofactor biosynthesis; molybdopterin biosynthesis. Catalyzes the conversion of (8S)-3',8-cyclo-7,8-dihydroguanosine 5'-triphosphate to cyclic pyranopterin monophosphate (cPMP). The chain is Probable cyclic pyranopterin monophosphate synthase from Sulfolobus acidocaldarius (strain ATCC 33909 / DSM 639 / JCM 8929 / NBRC 15157 / NCIMB 11770).